Reading from the N-terminus, the 335-residue chain is tRNA N6-adenosine threonylcarbamoyltransferase (335 aa).

Residues histidine 109, histidine 113, and tyrosine 130 each coordinate a divalent metal cation. Substrate contacts are provided by residues 130-134 (YVSGG), aspartate 162, glycine 177, glutamate 181, and asparagine 266. Aspartate 294 contacts a divalent metal cation.

The protein belongs to the KAE1 / TsaD family. As to quaternary structure, component of the EKC/KEOPS complex composed of at least tp53rk, tprkb, osgep and lage3; the whole complex dimerizes. It depends on a divalent metal cation as a cofactor.

It is found in the cytoplasm. The protein localises to the nucleus. The enzyme catalyses L-threonylcarbamoyladenylate + adenosine(37) in tRNA = N(6)-L-threonylcarbamoyladenosine(37) in tRNA + AMP + H(+). Functionally, component of the EKC/KEOPS complex that is required for the formation of a threonylcarbamoyl group on adenosine at position 37 (t(6)A37) in tRNAs that read codons beginning with adenine. The complex is probably involved in the transfer of the threonylcarbamoyl moiety of threonylcarbamoyl-AMP (TC-AMP) to the N6 group of A37. OSGEP likely plays a direct catalytic role in this reaction, but requires other protein(s) of the complex to fulfill this activity. This Danio rerio (Zebrafish) protein is tRNA N6-adenosine threonylcarbamoyltransferase.